Reading from the N-terminus, the 276-residue chain is Large ribosomal subunit protein uL2c (276 aa).

The tract at residues 225–276 (AMNPVDHPHGGGEGRTPIGRKKPVTPWGYSALGKKSRKRNRYSDASILRRRE) is disordered.

The protein belongs to the universal ribosomal protein uL2 family. Part of the 50S ribosomal subunit.

It localises to the plastid. Its subcellular location is the chloroplast. The chain is Large ribosomal subunit protein uL2c (rpl2) from Pinus thunbergii (Japanese black pine).